A 641-amino-acid chain; its full sequence is Peroxisomal targeting signal 1 receptor (641 aa).

Cys-12 is covalently cross-linked (Glycyl cysteine thioester (Cys-Gly) (interchain with G-Cter in ubiquitin)). The tract at residues 12-34 (CSEPNALGNFVQHFTNERSYHDK) is amphipathic helix 1 (AH1). The segment at 74-92 (HLMMDRHLNLRDGPREHKE) is amphipathic helix 2 (AH2). Residues 261-288 (VEAAWDETARRTISDITRPITQINDPKL) are amphipathic helix 4 (AH4). Positions 331–335 (WTEDY) match the WxxxF/Y motif motif. 6 TPR repeats span residues 359 to 392 (DSDTLERGMGLFNEGHLSDSIIALESEVKRNPEN), 393 to 426 (AMAWMYLGIAHAENDQDSQATTCLIKSLQIDPTN), 427 to 460 (SKARLALAVSHTNDYQKERALDTLEEWLQRTPEY), 503 to 536 (PEVQTALGLLYNMSYDYDKAVDCFKAALQNSPTD), 538 to 570 (QLWNKLGATLANSNRSQEALGAYFKALEHKPSY), and 571 to 604 (VRARSNLGISYLSLNMFQESATTFLGAIAIHPAP).

This sequence belongs to the peroxisomal targeting signal receptor family. Interacts (via WxxxF/Y and LVxEF motifs) with PEX14; promoting translocation through the PEX13-PEX14 docking complex. Interacts with PEX7, promoting peroxisomal import of proteins containing a C-terminal PTS2-type peroxisomal targeting signal. Monoubiquitinated at Cys-12 by PEX2 during PEX5 passage through the retrotranslocation channel. Cys-12 monoubiquitination acts as a recognition signal for the PEX1-PEX6 complex and is required for PEX5 extraction and export from peroxisomes. When PEX5 recycling is compromised, polyubiquitinated by PEX10 during its passage through the retrotranslocation channel, leading to its degradation.

The protein localises to the cytoplasm. The protein resides in the cytosol. It localises to the peroxisome matrix. Its function is as follows. Receptor that mediates peroxisomal import of proteins containing a C-terminal PTS1-type tripeptide peroxisomal targeting signal (SKL-type). Binds to cargo proteins containing a PTS1 peroxisomal targeting signal in the cytosol, and translocates them into the peroxisome matrix by passing through the PEX13-PEX14 docking complex along with cargo proteins. PEX5 receptor is then retrotranslocated into the cytosol, leading to release of bound cargo in the peroxisome matrix, and reset for a subsequent peroxisome import cycle. In terms of biological role, in addition to promoting peroxisomal translocation of proteins containing a PTS1 peroxisomal targeting signal, mediates peroxisomal import of proteins containing a C-terminal PTS2-type peroxisomal targeting signal via its interaction with PEX7. Interaction with PEX7 only takes place when PEX7 is associated with cargo proteins containing a PTS2 peroxisomal targeting signal. PEX7 along with PTS2-containing cargo proteins are then translocated through the PEX13-PEX14 docking complex together with PEX5. The polypeptide is Peroxisomal targeting signal 1 receptor (pex5) (Dictyostelium discoideum (Social amoeba)).